The sequence spans 490 residues: GTPase Der (490 aa).

EngA-type G domains are found at residues 3–166 (PVVA…MEDL) and 203–376 (IKLA…DSST). GTP contacts are provided by residues 9 to 16 (GRPNVGKS), 56 to 60 (DTGGI), 118 to 121 (NKTD), 209 to 216 (GRPNVGKS), 256 to 260 (DTAGV), and 321 to 324 (NKWD). Residues 377 to 461 (RRVGTSMLTR…PIRIQFKEGE (85 aa)) enclose the KH-like domain.

Belongs to the TRAFAC class TrmE-Era-EngA-EngB-Septin-like GTPase superfamily. EngA (Der) GTPase family. As to quaternary structure, associates with the 50S ribosomal subunit.

In terms of biological role, GTPase that plays an essential role in the late steps of ribosome biogenesis. This Escherichia coli O17:K52:H18 (strain UMN026 / ExPEC) protein is GTPase Der.